A 1524-amino-acid chain; its full sequence is DNA-directed RNA polymerase subunit beta' (1524 aa).

Zn(2+)-binding residues include C58, C60, C73, and C76. D739, D741, and D743 together coordinate Mg(2+). Residues C1112, C1194, C1201, and C1204 each coordinate Zn(2+). Residues 1502-1524 (AVEAKEKEAPRRPVRREQPGKGL) are disordered.

It belongs to the RNA polymerase beta' chain family. In terms of assembly, the RNAP catalytic core consists of 2 alpha, 1 beta, 1 beta' and 1 omega subunit. When a sigma factor is associated with the core the holoenzyme is formed, which can initiate transcription. Mg(2+) serves as cofactor. It depends on Zn(2+) as a cofactor.

It catalyses the reaction RNA(n) + a ribonucleoside 5'-triphosphate = RNA(n+1) + diphosphate. In terms of biological role, DNA-dependent RNA polymerase catalyzes the transcription of DNA into RNA using the four ribonucleoside triphosphates as substrates. This chain is DNA-directed RNA polymerase subunit beta', found in Thermus aquaticus.